A 134-amino-acid polypeptide reads, in one-letter code: Small ribosomal subunit protein uS8 (134 aa).

The protein belongs to the universal ribosomal protein uS8 family. In terms of assembly, part of the 30S ribosomal subunit. Contacts proteins S5 and S12.

Functionally, one of the primary rRNA binding proteins, it binds directly to 16S rRNA central domain where it helps coordinate assembly of the platform of the 30S subunit. The sequence is that of Small ribosomal subunit protein uS8 from Thermotoga sp. (strain RQ2).